A 478-amino-acid chain; its full sequence is MLRKGSCKPGSWGSFWAILALVGLVTRAAQRADVGGEAAGTAINHSHMLLQRLQDLLRQGNASDVILRVQAVGTDEVRAFHTHRLLLGLHSELFRELLSNQSEVMLRESRDCAAVFDKFIRYLYCGELTVLLAQAIPLHRLATKYRVASLQRGVADYMRAHLAGGVGPAVGWYHYAVSTGDEALRESCLQFLAWNLSAVAGSAEWGAVSPELLAQLLQRSDLVLQDELELFHALEAWLGRARPPPTVAERALRAIRYPMIPPAQLFQLQARSAALARHGPAVADLLLQAYQFHAASPLHYAKFFHVNGSAFLPRNYLAPAWGAPWVINNPARDDRSTSFQTQLGPSGHDAGRRITWNVLFSPRWLPVSLRPVYADAAGTALPAARPEDGRPRLVVTPASSGGDAAGVSFQKTVLVGARHQGRLLVRHAYSFHQSSEEAGDFLAHADLQRRNSEYLVENALHLHLIVKPVYHTLIRTPS.

A signal peptide spans 1–28 (MLRKGSCKPGSWGSFWAILALVGLVTRA). N-linked (GlcNAc...) asparagine glycans are attached at residues asparagine 61, asparagine 100, asparagine 195, and asparagine 307. The BTB domain maps to 63–132 (SDVILRVQAV…LYCGELTVLL (70 aa)). One can recognise a BACK domain in the interval 169-269 (AVGWYHYAVS…IPPAQLFQLQ (101 aa)).

The protein resides in the secreted. The polypeptide is BTB/POZ domain-containing protein 17 (Btbd17) (Mus musculus (Mouse)).